Here is a 149-residue protein sequence, read N- to C-terminus: Large ribosomal subunit protein bL9 (149 aa).

It belongs to the bacterial ribosomal protein bL9 family.

In terms of biological role, binds to the 23S rRNA. This is Large ribosomal subunit protein bL9 from Klebsiella pneumoniae (strain 342).